The chain runs to 158 residues: Small ribosomal subunit protein uS10m (158 aa).

The protein belongs to the universal ribosomal protein uS10 family.

Its subcellular location is the mitochondrion. The polypeptide is Small ribosomal subunit protein uS10m (mrps-10) (Caenorhabditis briggsae).